A 257-amino-acid chain; its full sequence is Protein YIPF5 (257 aa).

Over methionine 1–glutamate 124 the chain is Cytoplasmic. The segment at proline 75–lysine 106 is interaction with Sec23. A helical membrane pass occupies residues threonine 125–glycine 145. A topological domain (lumenal) is located at residue lysine 146. Residues isoleucine 147–leucine 167 form a helical membrane-spanning segment. At asparagine 168–threonine 173 the chain is on the cytoplasmic side. Residues glycine 174–leucine 194 traverse the membrane as a helical segment. The Lumenal segment spans residues serine 195 to serine 196. Residues phenylalanine 197–glycine 217 form a helical membrane-spanning segment. At tryptophan 218–glutamine 236 the chain is on the cytoplasmic side. A helical transmembrane segment spans residues glutamine 237 to phenylalanine 257.

It belongs to the YIP1 family. Interacts with the COPII coat components Sec23 (SEC23A and/or SEC23B) and Sec24 (SEC24A and/or SEC24B). Interacts with YIF1A. May interact with RAB1A. Interacts with YIPF3 and YIPF4.

The protein localises to the endoplasmic reticulum membrane. It is found in the golgi apparatus. The protein resides in the cis-Golgi network membrane. Its subcellular location is the cytoplasmic vesicle. It localises to the COPII-coated vesicle. Plays a role in transport between endoplasmic reticulum and Golgi. In pancreatic beta cells, required to transport proinsulin from endoplasmic reticulum into the Golgi. The polypeptide is Protein YIPF5 (YIPF5) (Macaca fascicularis (Crab-eating macaque)).